A 148-amino-acid chain; its full sequence is Large ribosomal subunit protein uL13 (148 aa).

Basic and acidic residues-rich tracts occupy residues 71–81 and 89–99; these read GKKEKQKEYHE and DHSHSPEEMRA. Disordered stretches follow at residues 71 to 99 and 125 to 148; these read GKKEKQKEYHEYSGYPGGDHSHSPEEMRA and KKLKVYAGPDHPHEAQQPEPLDNA.

It belongs to the universal ribosomal protein uL13 family. In terms of assembly, part of the 50S ribosomal subunit.

In terms of biological role, this protein is one of the early assembly proteins of the 50S ribosomal subunit, although it is not seen to bind rRNA by itself. It is important during the early stages of 50S assembly. This Salinibacter ruber (strain DSM 13855 / M31) protein is Large ribosomal subunit protein uL13.